A 113-amino-acid chain; its full sequence is Hydrogenase maturation factor HypA (113 aa).

Residue His2 coordinates Ni(2+). Zn(2+) is bound by residues Cys73, Cys76, Cys89, and Cys92.

Belongs to the HypA/HybF family.

Its function is as follows. Involved in the maturation of [NiFe] hydrogenases. Required for nickel insertion into the metal center of the hydrogenase. The sequence is that of Hydrogenase maturation factor HypA from Moorella thermoacetica (strain ATCC 39073 / JCM 9320).